Here is a 419-residue protein sequence, read N- to C-terminus: MSRYVFTSESVTEGHPDKICDQVSDAVLDALLAQDPSSRVACETVVNTGLCLITGEVTSNAQVDFIHLVRNVIREIGYSGARAGGFDATSCAVLVALDQQSPDIAQGVNEADDHSGDPLDKVGAGDQGIMFGYACDETPELMPLPISLAHRLARQLAAVRHDGSLSYLLPDGKTQVSVVYENDRPVAIDTILISTQHTSEVEGISDENGIRERITQDLWTHVVEPATADLPLKPNREATRFLVNPTGKFVVGGPQGDAGLTGRKIIVDTYGGYARHGGGAFSGKDPTKVDRSAAYAARFVAKCLVAAGLAQRAEVQLSYAIGVAKPVSILVESFGTGKVTNDELTALVQDHFDLRPGAIIEQFKLRQLPQQRGGRFYQDTAAYGHFGRPDLKLPWEDVTDKASTLLQAEAQQQKQGSSL.

An ATP-binding site is contributed by H15. D17 provides a ligand contact to Mg(2+). E43 contributes to the K(+) binding site. Positions 56 and 100 each coordinate L-methionine. The interval 100–110 is flexible loop; it reads QSPDIAQGVNE. ATP-binding positions include 171–173, 248–249, D257, 263–264, A280, and K284; these read DGK, KF, and RK. L-methionine is bound at residue D257. K288 is an L-methionine binding site.

This sequence belongs to the AdoMet synthase family. Homotetramer; dimer of dimers. It depends on Mg(2+) as a cofactor. K(+) serves as cofactor.

It is found in the cytoplasm. The catalysed reaction is L-methionine + ATP + H2O = S-adenosyl-L-methionine + phosphate + diphosphate. It participates in amino-acid biosynthesis; S-adenosyl-L-methionine biosynthesis; S-adenosyl-L-methionine from L-methionine: step 1/1. In terms of biological role, catalyzes the formation of S-adenosylmethionine (AdoMet) from methionine and ATP. The overall synthetic reaction is composed of two sequential steps, AdoMet formation and the subsequent tripolyphosphate hydrolysis which occurs prior to release of AdoMet from the enzyme. The sequence is that of S-adenosylmethionine synthase from Prochlorococcus marinus (strain MIT 9313).